Consider the following 172-residue polypeptide: Ferritin-2 heavy chain (172 aa).

Residues 8–157 (QSFATECENA…DYLTETQRVG (150 aa)) enclose the Ferritin-like diiron domain. Residues glutamate 25, glutamate 60, histidine 63, glutamate 105, and glutamine 139 each coordinate Fe cation.

This sequence belongs to the ferritin family. In terms of assembly, oligomer of 24 subunits. The functional molecule forms a roughly spherical shell with a diameter of 12 nm and contains a central cavity into which the insoluble mineral iron core is deposited.

It carries out the reaction 4 Fe(2+) + O2 + 4 H(+) = 4 Fe(3+) + 2 H2O. Stores iron in a soluble, non-toxic, readily available form. Important for iron homeostasis. Has ferroxidase activity. Iron is taken up in the ferrous form and deposited as ferric hydroxides after oxidation. In Schistosoma mansoni (Blood fluke), this protein is Ferritin-2 heavy chain (SCM-2).